Here is a 202-residue protein sequence, read N- to C-terminus: ATP-dependent Clp protease proteolytic subunit (202 aa).

The active-site Nucleophile is Ser101. His126 is a catalytic residue.

The protein belongs to the peptidase S14 family. In terms of assembly, component of the chloroplastic Clp protease core complex.

It is found in the plastid. The protein localises to the chloroplast stroma. The catalysed reaction is Hydrolysis of proteins to small peptides in the presence of ATP and magnesium. alpha-casein is the usual test substrate. In the absence of ATP, only oligopeptides shorter than five residues are hydrolyzed (such as succinyl-Leu-Tyr-|-NHMec, and Leu-Tyr-Leu-|-Tyr-Trp, in which cleavage of the -Tyr-|-Leu- and -Tyr-|-Trp bonds also occurs).. Cleaves peptides in various proteins in a process that requires ATP hydrolysis. Has a chymotrypsin-like activity. Plays a major role in the degradation of misfolded proteins. In Acorus calamus (Sweet flag), this protein is ATP-dependent Clp protease proteolytic subunit.